The primary structure comprises 72 residues: SRY-related protein MG42 (72 aa).

A DNA-binding region (HMG box) is located at residues 1 to 69; that stretch reads VKRPMNAFMV…KHMADYPNYK (69 aa).

Its subcellular location is the nucleus. The sequence is that of SRY-related protein MG42 from Tarentola mauritanica (Common wall gecko).